The sequence spans 525 residues: Heat shock factor protein 1 (525 aa).

The residue at position 1 (Met1) is an N-acetylmethionine. The tract at residues 15 to 120 (VPAFLTKLWT…LLENIKRKVT (106 aa)) is DNA-binding domain. The residue at position 80 (Lys80) is an N6-acetyllysine. N6-acetyllysine; alternate is present on Lys91. Residue Lys91 forms a Glycyl lysine isopeptide (Lys-Gly) (interchain with G-Cter in SUMO2); alternate linkage. Lys118 carries the N6-acetyllysine modification. The residue at position 121 (Ser121) is a Phosphoserine; by MAPKAPK2. Residues Lys126 and Lys131 each participate in a glycyl lysine isopeptide (Lys-Gly) (interchain with G-Cter in SUMO2) cross-link. The segment at 130-203 (IKIRQDSVTR…ISLVQSNRIL (74 aa)) is hydrophobic repeat HR-A/B. Thr142 bears the Phosphothreonine; by CK2 mark. Lys150 and Lys188 each carry N6-acetyllysine. The interval 203–224 (LGVKRKIPLMLSDSNSAHSVPK) is d domain. Lys208 carries the post-translational modification N6-acetyllysine; alternate. A Glycyl lysine isopeptide (Lys-Gly) (interchain with G-Cter in SUMO2); alternate cross-link involves residue Lys208. Residue Ser216 is modified to Phosphoserine; by PLK1. The interval 221–310 (SVPKYGRQYS…PPSPPHSPRV (90 aa)) is regulatory domain. A Glycyl lysine isopeptide (Lys-Gly) (interchain with G-Cter in SUMO2) cross-link involves residue Lys224. Ser230 is modified (phosphoserine; by CAMK2A). 2 disordered regions span residues 272 to 327 (APTS…PLSP) and 340 to 365 (PTPA…TPST). Phosphoserine occurs at positions 275 and 292. An N6-acetyllysine; alternate modification is found at Lys298. Lys298 is covalently cross-linked (Glycyl lysine isopeptide (Lys-Gly) (interchain with G-Cter in SUMO2); alternate). A Glycyl lysine isopeptide (Lys-Gly) (interchain with G-Cter in SUMO); alternate cross-link involves residue Lys298. 4 positions are modified to phosphoserine: Ser303, Ser307, Ser314, and Ser319. Ser320 carries the post-translational modification Phosphoserine; by PKA. The residue at position 323 (Thr323) is a Phosphothreonine. Ser326 is modified (phosphoserine; by MAPK12). A compositionally biased stretch (polar residues) spans 343-355 (AASNTAPMDTTGA). Ser345 carries the post-translational modification Phosphoserine. The interval 367 to 525 (EKCLSVACLD…PHKAKDPTVS (159 aa)) is transactivation domain. The hydrophobic repeat HR-C stretch occupies residues 380 to 405 (LSDHLDAMDSNLDNLQTMLTSHGFSV). Residues 408–416 (SALLDLFSP) carry the 9aaTAD motif. Ser415 bears the Phosphoserine; by PLK1 mark. A Phosphoserine modification is found at Ser440. Disordered regions lie at residues 441-460 (PQEP…SGKQ) and 495-525 (YFSE…PTVS). Residues 515–525 (EPHKAKDPTVS) show a composition bias toward basic and acidic residues. Lys520 is modified (N6-acetyllysine).

The protein belongs to the HSF family. As to quaternary structure, monomer; cytoplasmic latent and transcriptionally inactive monomeric form in unstressed cells. Homotrimer; in response to stress, such as heat shock, homotrimerizes and translocates into the nucleus, binds to heat shock element (HSE) sequences in promoter of heat shock protein (HSP) genes and acquires transcriptional ability. Interacts (via monomeric form) with FKBP4; this interaction occurs in unstressed cells. Associates (via monomeric form) with HSP90 proteins in a multichaperone complex in unnstressed cell; this association maintains HSF1 in a non-DNA-binding and transcriptional inactive form by preventing HSF1 homotrimerization. Homotrimeric transactivation activity is modulated by protein-protein interactions and post-translational modifications. Interacts with HSP90AA1; this interaction is decreased in a IER5-dependent manner, promoting HSF1 accumulation in the nucleus, homotrimerization and DNA-binding activities. Part (via regulatory domain in the homotrimeric form) of a large heat shock-induced HSP90-dependent multichaperone complex at least composed of FKBP4, FKBP5, HSP90 proteins, PPID, PPP5C and PTGES3; this association maintains the HSF1 homotrimeric DNA-bound form in a transcriptionally inactive form. Interacts with BAG3 (via BAG domain); this interaction occurs in normal and heat-shocked cells promoting nuclear shuttling of HSF1 in a BAG3-dependent manner. Interacts (via homotrimeric and hyperphosphorylated form) with FKBP4; this interaction occurs upon heat shock in a HSP90-dependent multichaperone complex. Interacts (via homotrimeric form preferentially) with EEF1A proteins. In heat shocked cells, stress-denatured proteins compete with HSF1 homotrimeric DNA-bound form for association of the HSP90-dependent multichaperone complex, and hence alleviating repression of HSF1-mediated transcriptional activity. Interacts (via homotrimeric form preferentially) with DAXX; this interaction relieves homotrimeric HSF1 from repression of its transcriptional activity by HSP90-dependent multichaperone complex upon heat shock. Interacts (via D domain and preferentially with hyperphosphorylated form) with JNK1; this interaction occurs under both normal growth conditions and immediately upon heat shock. Interacts (via D domain and preferentially with hyperphosphorylated form) with MAPK3; this interaction occurs upon heat shock. Interacts with IER5 (via central region); this interaction promotes PPP2CA-induced dephosphorylation on Ser-121, Ser-307, Ser-314 and Thr-323 and HSF1 transactivation activity. Found in a ribonucleoprotein complex composed of the HSF1 homotrimeric form, translation elongation factor eEF1A proteins and non-coding RNA heat shock RNA-1 (HSR1); this complex occurs upon heat shock and stimulates HSF1 DNA-binding activity. Interacts (via transactivation domain) with HSPA1A/HSP70 and DNAJB1; these interactions result in the inhibition of heat shock- and HSF1-induced transcriptional activity during the attenuation and recovery phase from heat shock. Interacts (via Ser-303 and Ser-307 phosphorylated form) with YWHAE; this interaction promotes HSF1 sequestration in the cytoplasm in an ERK-dependent manner. Found in a complex with IER5 and PPP2CA. Interacts with TPR; this interaction increases upon heat shock and stimulates export of HSP70 mRNA. Interacts with SYMPK (via N-terminus) and CSTF2; these interactions occur upon heat shock. Interacts (via transactivation domain) with HSPA8. Interacts with EEF1D; this interaction occurs at heat shock promoter element (HSE) sequences. Interacts with MAPKAPK2. Interacts with PRKACA/PKA. Interacts (via transactivation domain) with GTF2A2. Interacts (via transactivation domain) with GTF2B. Interacts (via transactivation domain) with TBP. Interacts with CDK9, CCNT1 and EP300. Interacts (via N-terminus) with XRCC5 (via N-terminus) and XRCC6 (via N-terminus); these interactions are direct and prevent XRCC5/XRCC6 heterodimeric binding and non-homologous end joining (NHEJ) repair activities induced by ionizing radiation (IR). Interacts with PLK1; this interaction occurs during the early mitotic period, increases upon heat shock but does not modulate neither HSF1 homotrimerization and DNA-binding activities. Interacts (via Ser-216 phosphorylated form) with CDC20; this interaction occurs in mitosis in a MAD2L1-dependent manner and prevents PLK1-stimulated degradation of HSF1 by blocking the recruitment of the SCF(BTRC) ubiquitin ligase complex. Interacts with MAD2L1; this interaction occurs in mitosis. Interacts with BTRC; this interaction occurs during mitosis, induces its ubiquitin-dependent degradation following stimulus-dependent phosphorylation at Ser-216, a process inhibited by CDC20. Interacts with HSP90AA1 and HSP90AB1. Forms a complex with TTC5/STRAP and p300/EP300; these interactions augment chromatin-bound HSF1 and p300/EP300 histone acetyltransferase activity. In terms of processing, phosphorylated. Phosphorylated in unstressed cells; this phosphorylation is constitutive and implicated in the repression of HSF1 transcriptional activity. Phosphorylated on Ser-121 by MAPKAPK2; this phosphorylation promotes interaction with HSP90 proteins and inhibits HSF1 homotrimerization, DNA-binding and transactivation activities. Phosphorylation on Ser-303 by GSK3B/GSK3-beat and on Ser-307 by MAPK3 within the regulatory domain is involved in the repression of HSF1 transcriptional activity and occurs in a RAF1-dependent manner. Phosphorylation on Ser-303 and Ser-307 increases HSF1 nuclear export in a YWHAE- and XPO1/CRM1-dependent manner. Phosphorylation on Ser-307 is a prerequisite for phosphorylation on Ser-303. According to, Ser-303 is not phosphorylated in unstressed cells. Phosphorylated on Ser-415 by PLK1; phosphorylation promotes nuclear translocation upon heat shock. Hyperphosphorylated upon heat shock and during the attenuation and recovery phase period of the heat shock response. Phosphorylated on Thr-142; this phosphorylation increases HSF1 transactivation activity upon heat shock. Phosphorylation on Ser-230 by CAMK2A; this phosphorylation enhances HSF1 transactivation activity upon heat shock. Phosphorylation on Ser-326 by MAPK12; this phosphorylation enhances HSF1 nuclear translocation, homotrimerization and transactivation activities upon heat shock. Phosphorylated on Ser-320 by PRKACA/PKA; this phosphorylation promotes nuclear localization and transcriptional activity upon heat shock. Phosphorylated by MAPK8; this phosphorylation occurs upon heat shock, induces HSF1 translocation into nuclear stress bodies and negatively regulates transactivation activity. Neither basal nor stress-inducible phosphorylation on Ser-230, Ser-292, Ser-303, Ser-307, Ser-314, Ser-319, Ser-320, Thr-323, Ser-326, Ser-338, Ser-345, Ser-364 and Thr-365 within the regulatory domain is involved in the regulation of HSF1 subcellular localization or DNA-binding activity; however, it negatively regulates HSF1 transactivation activity. Phosphorylated on Ser-216 by PLK1 in the early mitotic period; this phosphorylation regulates HSF1 localization to the spindle pole, the recruitment of the SCF(BTRC) ubiquitin ligase complex inducing HSF1 degradation, and hence mitotic progression. Dephosphorylated on Ser-121, Ser-307, Ser-314 and Thr-323 by phosphatase PPP2CA in an IER5-dependent manner, leading to HSF1-mediated transactivation activity. Post-translationally, sumoylated with SUMO1 and SUMO2 upon heat shock in a ERK2-dependent manner. Sumoylated by SUMO1 on Lys-298; sumoylation occurs upon heat shock and promotes its localization to nuclear stress bodies and DNA-binding activity. Phosphorylation on Ser-303 and Ser-307 is probably a prerequisite for sumoylation. Acetylated on Lys-118; this acetylation is decreased in a IER5-dependent manner. Acetylated on Lys-118, Lys-208 and Lys-298; these acetylations occur in a EP300-dependent manner. Acetylated on Lys-80; this acetylation inhibits DNA-binding activity upon heat shock. Deacetylated on Lys-80 by SIRT1; this deacetylation increases DNA-binding activity. In terms of processing, ubiquitinated by SCF(BTRC) and degraded following stimulus-dependent phosphorylation at Ser-216 by PLK1 in mitosis. Polyubiquitinated. Undergoes proteasomal degradation upon heat shock and during the attenuation and recovery phase period of the heat shock response.

The protein localises to the nucleus. It is found in the cytoplasm. The protein resides in the nucleoplasm. It localises to the perinuclear region. Its subcellular location is the cytoskeleton. The protein localises to the spindle pole. It is found in the microtubule organizing center. The protein resides in the centrosome. It localises to the chromosome. Its subcellular location is the centromere. The protein localises to the kinetochore. Functions as a stress-inducible and DNA-binding transcription factor that plays a central role in the transcriptional activation of the heat shock response (HSR), leading to the expression of a large class of molecular chaperones, heat shock proteins (HSPs), that protect cells from cellular insult damage. In unstressed cells, is present in a HSP90-containing multichaperone complex that maintains it in a non-DNA-binding inactivated monomeric form. Upon exposure to heat and other stress stimuli, undergoes homotrimerization and activates HSP gene transcription through binding to site-specific heat shock elements (HSEs) present in the promoter regions of HSP genes. Upon heat shock stress, forms a chromatin-associated complex with TTC5/STRAP and p300/EP300 to stimulate HSR transcription, therefore increasing cell survival. Activation is reversible, and during the attenuation and recovery phase period of the HSR, returns to its unactivated form. Binds to inverted 5'-NGAAN-3' pentamer DNA sequences. Binds to chromatin at heat shock gene promoters. Activates transcription of transcription factor FOXR1 which in turn activates transcription of the heat shock chaperones HSPA1A and HSPA6 and the antioxidant NADPH-dependent reductase DHRS2. Binds the promoter region upstream of exon 1 of Mpv17l to activate expression of the M-LPS isoform which is involved in metabolism of reactive oxygen species. Also serves several other functions independently of its transcriptional activity. Involved in the repression of Ras-induced transcriptional activation of the c-fos gene in heat-stressed cells. Positively regulates pre-mRNA 3'-end processing and polyadenylation of HSP70 mRNA upon heat-stressed cells in a symplekin (SYMPK)-dependent manner. Plays a role in nuclear export of stress-induced HSP70 mRNA. Plays a role in the regulation of mitotic progression. Also plays a role as a negative regulator of non-homologous end joining (NHEJ) repair activity in a DNA damage-dependent manner. Involved in stress-induced cancer cell proliferation in a IER5-dependent manner. This Mus musculus (Mouse) protein is Heat shock factor protein 1.